Reading from the N-terminus, the 470-residue chain is Acyltransferase BOA11 (470 aa).

The active-site Proton acceptor is the histidine 156.

It belongs to the plant acyltransferase family.

Its pathway is polyketide biosynthesis. Acyltransferase; part of the gene cluster B that mediates the biosynthesis of botcinic acid and its botcinin derivatives, acetate-derived polyketides that contribute to virulence when combined with the sesquiterpene botrydial. Botcinic acid and its derivatives have been shown to induce chlorosis and necrosis during host plant infection, but also have antifungal activities. Two polyketide synthases, BOA6 and BOA9, are involved in the biosynthesis of botcinins. BOA6 mediates the formation of the per-methylated tetraketide core by condensation of four units of malonyl-CoA with one unit of acetyl-CoA, which would be methylated in activated methylene groups to yield a bicyclic acid intermediate that could then either be converted to botrylactone derivatives or lose the starter acetate unit through a retro-Claisen type C-C bond cleavage to yield botcinin derivatives. The second polyketide synthase, BOA9, is probably required for the biosynthesis of the tetraketide side chain of botcinins. The methyltransferase (MT) domain within BOA6 is probably responsible for the incorporation of four methyl groups. The trans-enoyl reductase BOA5 might take over the enoyl reductase function of BOA6 that misses an ER domain. The monooxygenases BOA2, BOA3 and BOA4 might be involved in further hydroxylations at C4, C5 and C8, whereas BOA7, close to BOA9, could potentially be involved in the hydroxylation at C4 in the side chain of botcinins. This is Acyltransferase BOA11 from Botryotinia fuckeliana (strain B05.10) (Noble rot fungus).